A 204-amino-acid polypeptide reads, in one-letter code: Thiamine-phosphate synthase (204 aa).

4-amino-2-methyl-5-(diphosphooxymethyl)pyrimidine is bound by residues 35 to 39 and Asn67; that span reads QVREK. Positions 68 and 87 each coordinate Mg(2+). Residue Ser106 participates in 4-amino-2-methyl-5-(diphosphooxymethyl)pyrimidine binding. 132–134 is a binding site for 2-[(2R,5Z)-2-carboxy-4-methylthiazol-5(2H)-ylidene]ethyl phosphate; sequence TPT. Lys135 is a 4-amino-2-methyl-5-(diphosphooxymethyl)pyrimidine binding site. 2-[(2R,5Z)-2-carboxy-4-methylthiazol-5(2H)-ylidene]ethyl phosphate is bound by residues Gly163 and 183 to 184; that span reads VS.

Belongs to the thiamine-phosphate synthase family. Mg(2+) serves as cofactor.

The catalysed reaction is 2-[(2R,5Z)-2-carboxy-4-methylthiazol-5(2H)-ylidene]ethyl phosphate + 4-amino-2-methyl-5-(diphosphooxymethyl)pyrimidine + 2 H(+) = thiamine phosphate + CO2 + diphosphate. It catalyses the reaction 2-(2-carboxy-4-methylthiazol-5-yl)ethyl phosphate + 4-amino-2-methyl-5-(diphosphooxymethyl)pyrimidine + 2 H(+) = thiamine phosphate + CO2 + diphosphate. It carries out the reaction 4-methyl-5-(2-phosphooxyethyl)-thiazole + 4-amino-2-methyl-5-(diphosphooxymethyl)pyrimidine + H(+) = thiamine phosphate + diphosphate. Its pathway is cofactor biosynthesis; thiamine diphosphate biosynthesis; thiamine phosphate from 4-amino-2-methyl-5-diphosphomethylpyrimidine and 4-methyl-5-(2-phosphoethyl)-thiazole: step 1/1. Functionally, condenses 4-methyl-5-(beta-hydroxyethyl)thiazole monophosphate (THZ-P) and 2-methyl-4-amino-5-hydroxymethyl pyrimidine pyrophosphate (HMP-PP) to form thiamine monophosphate (TMP). This Vibrio campbellii (strain ATCC BAA-1116) protein is Thiamine-phosphate synthase.